Reading from the N-terminus, the 416-residue chain is LysM domain-containing GPI-anchored protein 1 (416 aa).

The first 27 residues, 1–27 (MKIPEKPIFLIFVSLILASSLTFTATA), serve as a signal peptide directing secretion. 4 disulfide bridges follow: Cys34/Cys100, Cys40/Cys163, Cys98/Cys161, and Cys100/Cys163. Asn37 carries an N-linked (GlcNAc...) asparagine glycan. The region spanning 110-157 (THYKTRPSDNLGSIADSVYGGLVSAEQIQEANSVNDPSLLDVGTSLVI) is the LysM 1 domain. Asn165 carries an N-linked (GlcNAc...) asparagine glycan. In terms of domain architecture, LysM 2 spans 176–219 (LSYVVKEIDTLVGIARRYSTTITDLMNVNAMGAPDVSSGDILAV). 2 disulfides stabilise this stretch: Cys224–Cys256 and Cys251–Cys279. Residue Asn241 is glycosylated (N-linked (GlcNAc...) asparagine). Residues Asn288, Asn299, and Asn310 are each glycosylated (N-linked (GlcNAc...) asparagine). Residues 356 to 376 (DGPGSIASSPRSSMLPGGGIL) form a disordered region. Ala391 is lipidated: GPI-anchor amidated alanine. A propeptide spans 392-416 (SASSVSYFFITFLISIASFSLALSS) (removed in mature form).

Interacts with peptidoglycans.

The protein localises to the cell membrane. The protein resides in the secreted. Required as a cell surface receptor for peptidoglycan (PGN) elicitor signaling leading to innate immunity. Plays an essential role in detecting PGNs and restricting bacterial growth (of Pseudomonas syringae pv. tomato DC3000 for example). This Arabidopsis thaliana (Mouse-ear cress) protein is LysM domain-containing GPI-anchored protein 1 (LYM1).